The following is a 127-amino-acid chain: DNA-directed RNA polymerases I, II, and III subunit RPABC2 (127 aa).

The segment covering 1 to 34 (MSDNEDNFDGDDFDDVEEDEGLDDLENAEEEGQE) has biased composition (acidic residues). The segment at 1 to 53 (MSDNEDNFDGDDFDDVEEDEGLDDLENAEEEGQENVEILPSGERPQANQKRIT) is disordered. Ser-2 carries the N-acetylserine modification. The residue at position 2 (Ser-2) is a Phosphoserine; by CK2.

This sequence belongs to the archaeal Rpo6/eukaryotic RPB6 RNA polymerase subunit family. Component of the RNA polymerase I (Pol I), RNA polymerase II (Pol II) and RNA polymerase III (Pol III) complexes consisting of at least 13, 12 and 17 subunits, respectively. Pol I complex consists of a ten-subunit catalytic core composed of POLR1A/RPA1, POLR1B/RPA2, POLR1C/RPAC1, POLR1D/RPAC2, POLR1H/RPA12, POLR2E/RPABC1, POLR2F/RPABC2, POLR2H/RPABC3, POLR2K/RPABC4 and POLR2L/RPABC5; a mobile stalk subunit POLR1F/RPA43 protruding from the core and additional subunits homologous to general transcription factors POLR1E/RPA49 and POLR1G/RPA34. Part of Pol I pre-initiation complex (PIC), in which Pol I core assembles with RRN3 and promoter-bound UTBF and SL1/TIF-IB complex. Pol II complex contains a ten-subunit catalytic core composed of POLR2A/RPB1, POLR2B/RPB2, POLR2C/RPB3, POLR2I/RPB9, POLR2J/RPB11, POLR2E/RPABC1, POLR2F/RPABC2, POLR2H/RPABC3, POLR2K/RPABC4 and POLR2L/RPABC5 and a mobile stalk composed of two subunits POLR2D/RPB4 and POLR2G/RPB7. Part of Pol II(G) complex, in which Pol II core associates with an additional subunit POLR2M; unlike conventional Pol II, Pol II(G) functions as a transcriptional repressor. Part of TBP-based Pol II pre-initiation complex (PIC), in which Pol II core assembles with general transcription factors and other specific initiation factors including GTF2E1, GTF2E2, GTF2F1, GTF2F2, TCEA1, ERCC2, ERCC3, GTF2H2, GTF2H3, GTF2H4, GTF2H5, GTF2A1, GTF2A2, GTF2B and TBP; this large multi-subunit PIC complex mediates DNA unwinding and targets Pol II core to the transcription start site where the first phosphodiester bond forms. Pol III complex consists of a ten-subunit catalytic core composed of POLR3A/RPC1, POLR3B/RPC2, POLR1C/RPAC1, POLR1D/RPAC2, POLR3K/RPC10, POLR2E/RPABC1, POLR2F/RPABC2, POLR2H/RPABC3, POLR2K/RPABC4 and POLR2L/RPABC5; a mobile stalk composed of two subunits POLR3H/RPC8 and CRCP/RPC9, protruding from the core and functioning primarily in transcription initiation; and additional subunits homologous to general transcription factors of the RNA polymerase II machinery, POLR3C/RPC3-POLR3F/RPC6-POLR3G/RPC7 heterotrimer required for transcription initiation and POLR3D/RPC4-POLR3E/RPC5 heterodimer involved in both transcription initiation and termination.

The protein localises to the nucleus. The protein resides in the nucleolus. Its function is as follows. DNA-dependent RNA polymerase catalyzes the transcription of DNA into RNA using the four ribonucleoside triphosphates as substrates. Common component of RNA polymerases I, II, and III which synthesize ribosomal RNA precursors, mRNA precursors and many functional non-coding RNAs, and small RNAs, such as 5S rRNA and tRNAs, respectively. Pol II is the central component of the basal RNA polymerase II transcription machinery. Pols are composed of mobile elements that move relative to each other. In Pol II, POLR2F/RPABC2 is part of the clamp element and together with parts of POLR2A/RPB1 and POLR2B/RPB2 forms a pocket to which the POLR2D/RPB4-POLR2G/RPB7 subcomplex binds. This is DNA-directed RNA polymerases I, II, and III subunit RPABC2 from Homo sapiens (Human).